The following is a 74-amino-acid chain: U3-agatoxin-Ao1g (74 aa).

The signal sequence occupies residues 1–20; sequence MRAIISLLLISTMVFGVIEA. A propeptide spanning residues 21–34 is cleaved from the precursor; sequence VSVEEGLKIFEGER. Intrachain disulfides connect Cys-37–Cys-53, Cys-44–Cys-58, Cys-52–Cys-68, and Cys-60–Cys-66. Asparagine amide is present on Asn-72.

It belongs to the neurotoxin 07 (Beta/delta-agtx) family. 03 (aga-4) subfamily. Aga sub-subfamily. As to expression, expressed by the venom gland.

It is found in the secreted. Its function is as follows. Insecticidal neurotoxin that modulates the insect Nav channel (DmNaV1/tipE (para/tipE)) in a unique manner, with both the activation and inactivation processes being affected. The voltage dependence of activation is shifted toward more hyperpolarized potentials (analogous to site 4 toxins) and a non-inactivating persistent sodium current is induced (site 3-like action). Interestingly, both effects take place in a voltage-dependent manner, producing a bell-shaped curve between -80 and 0 mV. The chain is U3-agatoxin-Ao1g from Agelena orientalis (Funnel-web spider).